The chain runs to 380 residues: Omega-3 fatty acid desaturase, endoplasmic reticulum (380 aa).

The chain crosses the membrane as a helical span at residues 59-78 (VLVVTALAASAISFNSWFFW). The Histidine box-1 signature appears at 97–101 (HDCGH). A Histidine box-2 motif is present at residues 133–137 (HRTHH). Helical transmembrane passes span 208 to 231 (GVVT…LTIG) and 238 to 256 (LYGV…VTYL). The Histidine box-3 signature appears at 300–304 (HVIHH).

It belongs to the fatty acid desaturase type 1 family.

The protein resides in the endoplasmic reticulum membrane. The protein operates within lipid metabolism; polyunsaturated fatty acid biosynthesis. Microsomal (ER) omega-3 fatty acid desaturase introduces the third double bond in the biosynthesis of 18:3 fatty acids, important constituents of plant membranes. It is thought to use cytochrome b5 as an electron donor and to act on fatty acids esterified to phosphatidylcholine and, possibly, other phospholipids. This is Omega-3 fatty acid desaturase, endoplasmic reticulum (ARG1) from Vigna radiata var. radiata (Mung bean).